The primary structure comprises 199 residues: NAD(P)H dehydrogenase (quinone) (199 aa).

One can recognise a Flavodoxin-like domain in the interval 4–190 (VLVLYYSAYG…NGARYQGRTI (187 aa)). Residues 10 to 15 (SAYGHI) and 78 to 80 (TRF) each bind FMN. Residue Tyr12 participates in NAD(+) binding. Trp98 serves as a coordination point for substrate. Residues 113–119 (STATQHG) and His134 contribute to the FMN site.

This sequence belongs to the WrbA family. FMN serves as cofactor.

It catalyses the reaction a quinone + NADH + H(+) = a quinol + NAD(+). The enzyme catalyses a quinone + NADPH + H(+) = a quinol + NADP(+). This Afipia carboxidovorans (strain ATCC 49405 / DSM 1227 / KCTC 32145 / OM5) (Oligotropha carboxidovorans) protein is NAD(P)H dehydrogenase (quinone).